A 1372-amino-acid chain; its full sequence is Putative Polyprotein CP (1372 aa).

Coiled coils occupy residues 126–153 (NKEN…LKNI) and 299–350 (EKQK…EELD). Residues 372 to 398 (SESSEINEISDNETEQISGSDSDYNNE) form a disordered region. Over residues 386 to 398 (EQISGSDSDYNNE) the composition is skewed to polar residues. Residues 739-756 (CKCYNCGEEGHISPNCKK) form a CCHC-type zinc finger. A coiled-coil region spans residues 1162–1189 (DDRTNIQREKDQIEKADHNLELQKELNN).

The protein localises to the virion. The polypeptide is Putative Polyprotein CP (Cassava vein mosaic virus (CsVMV)).